A 158-amino-acid polypeptide reads, in one-letter code: S-ribosylhomocysteine lyase (158 aa).

3 residues coordinate Fe cation: H54, H58, and C124.

The protein belongs to the LuxS family. Homodimer. It depends on Fe cation as a cofactor.

The enzyme catalyses S-(5-deoxy-D-ribos-5-yl)-L-homocysteine = (S)-4,5-dihydroxypentane-2,3-dione + L-homocysteine. Involved in the synthesis of autoinducer 2 (AI-2) which is secreted by bacteria and is used to communicate both the cell density and the metabolic potential of the environment. The regulation of gene expression in response to changes in cell density is called quorum sensing. Catalyzes the transformation of S-ribosylhomocysteine (RHC) to homocysteine (HC) and 4,5-dihydroxy-2,3-pentadione (DPD). The protein is S-ribosylhomocysteine lyase of Lactiplantibacillus plantarum (strain ATCC BAA-793 / NCIMB 8826 / WCFS1) (Lactobacillus plantarum).